Consider the following 57-residue polypeptide: uncharacterized protein (57 aa).

A disordered region spans residues 34 to 57 (QGKRGETEGQIEISRKAGHPAPAF).

This is an uncharacterized protein from Saccharomyces cerevisiae (strain ATCC 204508 / S288c) (Baker's yeast).